The chain runs to 476 residues: Aspartyl/glutamyl-tRNA(Asn/Gln) amidotransferase subunit B (476 aa).

This sequence belongs to the GatB/GatE family. GatB subfamily. In terms of assembly, heterotrimer of A, B and C subunits.

It carries out the reaction L-glutamyl-tRNA(Gln) + L-glutamine + ATP + H2O = L-glutaminyl-tRNA(Gln) + L-glutamate + ADP + phosphate + H(+). The enzyme catalyses L-aspartyl-tRNA(Asn) + L-glutamine + ATP + H2O = L-asparaginyl-tRNA(Asn) + L-glutamate + ADP + phosphate + 2 H(+). In terms of biological role, allows the formation of correctly charged Asn-tRNA(Asn) or Gln-tRNA(Gln) through the transamidation of misacylated Asp-tRNA(Asn) or Glu-tRNA(Gln) in organisms which lack either or both of asparaginyl-tRNA or glutaminyl-tRNA synthetases. The reaction takes place in the presence of glutamine and ATP through an activated phospho-Asp-tRNA(Asn) or phospho-Glu-tRNA(Gln). This chain is Aspartyl/glutamyl-tRNA(Asn/Gln) amidotransferase subunit B, found in Clostridium botulinum (strain Loch Maree / Type A3).